A 231-amino-acid polypeptide reads, in one-letter code: Probable glutathione S-transferase GSTU1 (231 aa).

Residues 5–84 (KELVLLDFWV…YLDDAFPGTP (80 aa)) enclose the GST N-terminal domain. Glutathione contacts are provided by residues Ser-15, Lys-42, Ile-56, and 68-69 (ES). The 124-residue stretch at 97–220 (AAYARATARF…LPSPEKVYDF (124 aa)) folds into the GST C-terminal domain.

This sequence belongs to the GST superfamily. Tau family.

It carries out the reaction RX + glutathione = an S-substituted glutathione + a halide anion + H(+). In terms of biological role, conjugation of reduced glutathione to a wide number of exogenous and endogenous hydrophobic electrophiles. In Oryza sativa subsp. indica (Rice), this protein is Probable glutathione S-transferase GSTU1 (GSTU1).